Consider the following 627-residue polypeptide: (-)-beta-pinene synthase 1, chloroplastic (627 aa).

The N-terminal 50 residues, 1–50, are a transit peptide targeting the chloroplast; it reads MDLISVLPSTSKSCVCLHKPLSSSTHKLKPFCRTIRILGMPRPRKSVLMA. 3 residues coordinate Mg(2+): D378, D382, and D530. Residues 378 to 382 carry the DDXXD motif motif; sequence DDMYD.

Belongs to the terpene synthase family. Tpsd subfamily. It depends on Mg(2+) as a cofactor. Mn(2+) is required as a cofactor.

The protein resides in the plastid. The protein localises to the chloroplast. It carries out the reaction (2E)-geranyl diphosphate = (1S,5S)-beta-pinene + diphosphate. The enzyme catalyses (2E)-geranyl diphosphate = (1S,5S)-alpha-pinene + diphosphate. It functions in the pathway terpene metabolism; oleoresin biosynthesis. It participates in secondary metabolite biosynthesis; terpenoid biosynthesis. Its function is as follows. Monoterpene synthase (TPS) involved in the biosynthesis of monoterpene natural products included in conifer oleoresin secretions and volatile emissions; these compounds contribute to biotic and abiotic stress defense against herbivores and pathogens. Catalyzes the conversion of (2E)-geranyl diphosphate (GPP) to (-)-beta-pinene and, to a lower extent, to (-)-alpha-pinene. The polypeptide is (-)-beta-pinene synthase 1, chloroplastic (Pinus contorta (Shore pine)).